Here is a 556-residue protein sequence, read N- to C-terminus: Arginine--tRNA ligase (556 aa).

Positions 129 to 139 (ANPTGPLHVGH) match the 'HIGH' region motif.

Belongs to the class-I aminoacyl-tRNA synthetase family. Monomer.

The protein resides in the cytoplasm. The catalysed reaction is tRNA(Arg) + L-arginine + ATP = L-arginyl-tRNA(Arg) + AMP + diphosphate. The protein is Arginine--tRNA ligase of Desulfosudis oleivorans (strain DSM 6200 / JCM 39069 / Hxd3) (Desulfococcus oleovorans).